Here is a 252-residue protein sequence, read N- to C-terminus: Probable ABC transporter ATP-binding protein p29 (252 aa).

The region spanning L8–D252 is the ABC transporter domain. G42–S49 contacts ATP.

Belongs to the ABC transporter superfamily.

In terms of biological role, part of a high-affinity transport system. In Mesomycoplasma hyorhinis (Mycoplasma hyorhinis), this protein is Probable ABC transporter ATP-binding protein p29.